The sequence spans 712 residues: MATPAAVNPPEMASDIPGSVTLPVAPMAATGQVRMAGAMPARGGKRRSGMDFDDEDGEGPSKFSRENHSEIERRRRNKMTQYITELSDMVPTCSALARKPDKLTILRMAVSHMKSMRGTGNKSTDGAYKPSFLTEQELKHLILEAADGFLFVVAAETGRVIYVSDSVTPVLNQPQSEWFGSTLYEQVHPDDVEKLREQLCTSENSMTGRILDLKTGTVKKEGQQSSMRMCMGSRRSFICRMRCGNAPLDHLPLNRITTMRKRFRNGLGPVKEGEAQYAVVHCTGYIKAWPPAGMSIPEEDADVGQGSKYCLVAIGRLQVTSSPVCMDMSGMSVPTEFLSRHNSDGIITFVDPRCISVIGYQPQDLLGKDILEFCHPEDQSHLRESFQQVVKLKGQVLSVMYRFRTKNREWLLIRTSSFTFQNPYSDEIEYVICTNTNVKQLQQQQAELEVHQRDGLSSYDLSQVPVPNLPTGVHEAGKPVEKADAIFSQERDPRFAEMFAGISASEKKMMSSASASGSQQIYSQGSPFPAGHSGKAFSSSVVHVPGVNDIQSSSSTGQNISQISRQLNQGQVAWTGSRPPFPGQPSKTQSSAFGIGSSHPYPADPSSYSPLSSPAASSPSGNAYPSLANRTPGFAESGQSGGQFQGRPSEVWSQWQSQHHGQQSGEQHSHQQPGQTEVFQDMLPMPGDPTQGTGNYNIEDFADLGMFPPFSE.

Disordered stretches follow at residues 1 to 20 and 35 to 74; these read MATPAAVNPPEMASDIPGSV and MAGAMPARGGKRRSGMDFDDEDGEGPSKFSRENHSEIERR. Arginine 42 is modified (omega-N-methylarginine). A compositionally biased stretch (basic and acidic residues) spans 63–73; the sequence is FSRENHSEIER. In terms of domain architecture, bHLH spans 63–116; the sequence is FSRENHSEIERRRRNKMTQYITELSDMVPTCSALARKPDKLTILRMAVSHMKSM. PAS domains follow at residues 134–209 and 323–393; these read TEQE…MTGR and PVCM…VKLK. Residues 398-441 form the PAC domain; sequence SVMYRFRTKNREWLLIRTSSFTFQNPYSDEIEYVICTNTNVKQL. The interval 573 to 712 is disordered; it reads AWTGSRPPFP…DLGMFPPFSE (140 aa). Low complexity-rich tracts occupy residues 597–626 and 653–675; these read SSHPYPADPSSYSPLSSPAASSPSGNAYPS and SQWQSQHHGQQSGEQHSHQQPGQ.

As to quaternary structure, efficient DNA binding requires dimerization with another bHLH protein. Heterodimer with NPAS4 or SIM1. Heterodimer with the aryl hydrocarbon receptor (AHR) or the SIM1 protein. Interacts with TACC3.

The protein resides in the nucleus. Its function is as follows. Transcription factor that plays a role in the development of the hypothalamo-pituitary axis, postnatal brain growth, and visual and renal function. Specifically recognizes the xenobiotic response element (XRE). The sequence is that of Aryl hydrocarbon receptor nuclear translocator 2 (Arnt2) from Rattus norvegicus (Rat).